Consider the following 183-residue polypeptide: Small ribosomal subunit protein uS4c (183 aa).

An S4 RNA-binding domain is found at 82-143; the sequence is MRLDNILFRL…KQRSKALIQN (62 aa).

Belongs to the universal ribosomal protein uS4 family. Part of the 30S ribosomal subunit. Contacts protein S5. The interaction surface between S4 and S5 is involved in control of translational fidelity.

The protein resides in the plastid. It localises to the chloroplast. Its function is as follows. One of the primary rRNA binding proteins, it binds directly to 16S rRNA where it nucleates assembly of the body of the 30S subunit. In terms of biological role, with S5 and S12 plays an important role in translational accuracy. The polypeptide is Small ribosomal subunit protein uS4c (rps4) (Gladiolus communis (Cornflag)).